Consider the following 141-residue polypeptide: Large ribosomal subunit protein uL11 (141 aa).

Belongs to the universal ribosomal protein uL11 family. In terms of assembly, part of the ribosomal stalk of the 50S ribosomal subunit. Interacts with L10 and the large rRNA to form the base of the stalk. L10 forms an elongated spine to which L12 dimers bind in a sequential fashion forming a multimeric L10(L12)X complex. In terms of processing, one or more lysine residues are methylated.

Functionally, forms part of the ribosomal stalk which helps the ribosome interact with GTP-bound translation factors. This is Large ribosomal subunit protein uL11 from Trichlorobacter lovleyi (strain ATCC BAA-1151 / DSM 17278 / SZ) (Geobacter lovleyi).